The primary structure comprises 592 residues: Arginine--tRNA ligase (592 aa).

Positions 134–144 (ANPTGPLHVGH) match the 'HIGH' region motif.

This sequence belongs to the class-I aminoacyl-tRNA synthetase family. In terms of assembly, monomer.

It is found in the cytoplasm. The enzyme catalyses tRNA(Arg) + L-arginine + ATP = L-arginyl-tRNA(Arg) + AMP + diphosphate. The protein is Arginine--tRNA ligase of Coxiella burnetii (strain CbuK_Q154) (Coxiella burnetii (strain Q154)).